A 481-amino-acid chain; its full sequence is MACRKFCRVYGGQGRRKEEAVPPETKPSRVFPHGPFYTPAEDACLDSPPPETPKPSHTTPPSEAERLCHLQEILAQMYGNQDYPIEDDPSADAADDVDEDAPDDVAYPEEYAEELFLPGDATGPLIGANDHIPPPCGASPPGIRRRSRDEIGATGFTAEELDAMDREAARAISRGGKPPSTMAKLVTGMGFTIHGALTPGSEGCVFDSSHPDYPQRVIVKAGWYTSTSHEARLLRRLDHPAILPLLDLHVVSGVTCLVLPKYQADLYTYLSRRLNPLGRPQIAAVSRQLLSAVDYIHRQGIIHRDIKTENIFINTPEDICLGDFGAACFVQGSRSSPFPYGIAGTIDTNAPEVLAGDPYTTTVDIWSAGLVIFETAVHNASLFSAPRGPKRGPCDSQITRIIRQAQVHVDEFSPHPESRLTSRYRSRAAGNNRPPYTRPAWTRYYKMDIDVEYLVCKALTFDGALRPSAAELLCLPLFQQK.

The disordered stretch occupies residues 12 to 63 (GQGRRKEEAVPPETKPSRVFPHGPFYTPAEDACLDSPPPETPKPSHTTPPSE). Residues 191–478 (FTIHGALTPG…AAELLCLPLF (288 aa)) enclose the Protein kinase domain. Residues 197–205 (LTPGSEGCV) and lysine 220 contribute to the ATP site. Catalysis depends on aspartate 305, which acts as the Proton acceptor.

This sequence belongs to the protein kinase superfamily. Ser/Thr protein kinase family. In terms of assembly, interacts with host LAT; this interaction prevents LAT activation of TRAF6. In terms of processing, phosphorylated by UL13; this phosphorylation regulates subsequent phosphorylation of UL31 and UL34 by US3. Autophosphorylated.

Its subcellular location is the host cytoplasm. The protein localises to the host nucleus. The enzyme catalyses L-seryl-[protein] + ATP = O-phospho-L-seryl-[protein] + ADP + H(+). It catalyses the reaction L-threonyl-[protein] + ATP = O-phospho-L-threonyl-[protein] + ADP + H(+). Multifunctional serine/threonine kinase that plays a role in several processes including egress of virus particles from the nucleus, modulation of the actin cytoskeleton and inhibition of host immune response. Phosphorylates UL31 and UL34, two critical regulators of capsid budding from nucleus to endoplasmic reticulum, thereby facilitating virion egress. Modulates and redistributes host components of the nuclear envelope, including LMNA, emerin/EMD and the nuclear matrix protein MATR3. In turn, facilitates nuclear pore impairment and capsid release through impaired nuclear envelope. Phosphorylates envelope glycoprotein B (gB), probably to direct it to the cell surface. Promotes virus intracellular spread by restructuring host cell cytoskeleton. Blocks host apoptosis to extend cell survival and allow efficient viral replication. Promotes viral gene expression by phosphorylating host HDAC2 to reduce viral genome silencing. Strongly inhibits TCR-activated signal transduction in T-cells by reducing the ubiquitination of LAT and TRAF6, leading to a suboptimal activation of LAT. Subverts host antiviral innate immunity by inhibiting type I interferon production through hyperphosphorylation of beta-catenin/CTNNB1. In addition, phosphorylates the RNA sensor RIGI and the transcription factor IRF3 to prevent the RLR-mediated antiviral signaling pathway. Hyperphosphorylates host RELA and thereby dampens NF-kappa-B signaling. Acts as an immunoevasin partly responsible for inhibition of MR1 expression and antigen presentation in response to bacterial infection. The chain is Serine/threonine-protein kinase US3 (US3) from Human herpesvirus 1 (strain 17) (HHV-1).